Consider the following 217-residue polypeptide: Peptide deformylase 1 (217 aa).

Fe cation contacts are provided by Cys-129 and His-171. Glu-172 is a catalytic residue. His-175 serves as a coordination point for Fe cation.

This sequence belongs to the polypeptide deformylase family. Requires Fe(2+) as cofactor.

It catalyses the reaction N-terminal N-formyl-L-methionyl-[peptide] + H2O = N-terminal L-methionyl-[peptide] + formate. Its function is as follows. Removes the formyl group from the N-terminal Met of newly synthesized proteins. Requires at least a dipeptide for an efficient rate of reaction. N-terminal L-methionine is a prerequisite for activity but the enzyme has broad specificity at other positions. The sequence is that of Peptide deformylase 1 from Bifidobacterium longum (strain NCC 2705).